The following is a 325-amino-acid chain: MRPILLQGHERSITQIKYNRDGDLLFTVAKDPVVNVWYSVNGERLGTYNGHTGAVWCVDVDWETRHVLSGSADNSCRLWDCETGKQLALLQTNSAVRTCGFDFGGNIIMFSTDKQMGYQCFVSFIDLRDPSQIEDNEPYMKIPCSESKITSAVWGPLGENIIAGHENGELNHYSAKSGEIVNSIKEHSKQINDIQTSRDMTMFVTASKDCTSKLFDSTSLEHQKTFRTERPVNSAAVSPIYDHVVLGGGQEAMDVTTTSTRIGKFEARFFHVAFEEEFGRVKGHFGPINSLAFHPDGKSYSSGGEDGYVRIHYFDPQYFDFEFES.

WD repeat units lie at residues 8-47 (GHERSITQIKYNRDGDLLFTVAKDPVVNVWYSVNGERLGT), 50-91 (GHTG…ALLQ), 144-183 (CSESKITSAVWGPLGENIIAGHENGELNHYSAKSGEIVNS), 186-225 (EHSKQINDIQTSRDMTMFVTASKDCTSKLFDSTSLEHQKT), and 283-324 (GHFG…FEFE).

It belongs to the eIF-3 subunit I family. Component of the eukaryotic translation initiation factor 3 (eIF-3) complex, which is composed of 13 subunits: eif3a, eif3b, eif3c, eif3d, eif3e, eif3f, eif3g, eif3h, eif3i, eif3j, eif3k, eif3l and eif3m.

The protein resides in the cytoplasm. In terms of biological role, component of the eukaryotic translation initiation factor 3 (eIF-3) complex, which is involved in protein synthesis of a specialized repertoire of mRNAs and, together with other initiation factors, stimulates binding of mRNA and methionyl-tRNAi to the 40S ribosome. The eIF-3 complex specifically targets and initiates translation of a subset of mRNAs involved in cell proliferation. The protein is Eukaryotic translation initiation factor 3 subunit I (eif3i) of Xenopus laevis (African clawed frog).